The primary structure comprises 554 residues: Potassium/proton antiporter CemA (554 aa).

Residues 50 to 70 traverse the membrane as a helical segment; it reads SLFVVLFIPFFINIFTKIYVF. Residues 113–410 form an insert region; that stretch reads KTENFFPEKP…VPYNFNKNTE (298 aa). The next 3 membrane-spanning stretches (helical) occupy residues 429–449, 479–499, and 514–534; these read ISAI…LFLL, MLLF…EVIF, and IIFL…KYWI.

Belongs to the CemA family.

The protein resides in the plastid. The protein localises to the chloroplast inner membrane. The enzyme catalyses K(+)(in) + H(+)(out) = K(+)(out) + H(+)(in). Its function is as follows. Contributes to K(+)/H(+) antiport activity by supporting proton efflux to control proton extrusion and homeostasis in chloroplasts in a light-dependent manner to modulate photosynthesis. Prevents excessive induction of non-photochemical quenching (NPQ) under continuous-light conditions. Indirectly promotes efficient inorganic carbon uptake into chloroplasts. The sequence is that of Potassium/proton antiporter CemA from Stigeoclonium helveticum (Green alga).